Consider the following 418-residue polypeptide: RuvB-like helicase 2 (418 aa).

65–72 (GDRGSGKT) provides a ligand contact to ATP.

This sequence belongs to the RuvB family. In terms of assembly, component of the SWR1 chromatin remodeling complex, the INO80 chromatin remodeling complex, and of the R2TP complex.

The protein localises to the nucleus. It carries out the reaction ATP + H2O = ADP + phosphate + H(+). In terms of biological role, DNA helicase which participates in several chromatin remodeling complexes, including the SWR1 and the INO80 complexes. The SWR1 complex mediates the ATP-dependent exchange of histone H2A for the H2A variant HZT1 leading to transcriptional regulation of selected genes by chromatin remodeling. The INO80 complex remodels chromatin by shifting nucleosomes and is involved in DNA repair. Also involved in pre-rRNA processing. This chain is RuvB-like helicase 2 (RVB2), found in Encephalitozoon cuniculi (strain GB-M1) (Microsporidian parasite).